A 347-amino-acid chain; its full sequence is UDP-3-O-acylglucosamine N-acyltransferase (347 aa).

The active-site Proton acceptor is His-245.

The protein belongs to the transferase hexapeptide repeat family. LpxD subfamily. In terms of assembly, homotrimer.

It catalyses the reaction a UDP-3-O-[(3R)-3-hydroxyacyl]-alpha-D-glucosamine + a (3R)-hydroxyacyl-[ACP] = a UDP-2-N,3-O-bis[(3R)-3-hydroxyacyl]-alpha-D-glucosamine + holo-[ACP] + H(+). Its pathway is bacterial outer membrane biogenesis; LPS lipid A biosynthesis. Catalyzes the N-acylation of UDP-3-O-acylglucosamine using 3-hydroxyacyl-ACP as the acyl donor. Is involved in the biosynthesis of lipid A, a phosphorylated glycolipid that anchors the lipopolysaccharide to the outer membrane of the cell. This Chromohalobacter salexigens (strain ATCC BAA-138 / DSM 3043 / CIP 106854 / NCIMB 13768 / 1H11) protein is UDP-3-O-acylglucosamine N-acyltransferase.